Here is a 1085-residue protein sequence, read N- to C-terminus: DNA mismatch repair protein MutS (1085 aa).

Positions 533-564 (DEDLFGEEEQNAPPVGSSNHAVGTQPSADDEA) are disordered. Positions 548 to 559 (GSSNHAVGTQPS) are enriched in polar residues. 812-819 (GPNMSGKS) contributes to the ATP binding site. Residues 997-1042 (ERRAPRSAPPTVPARGDDRRSAGRASSSGAGAARGEQGRTLPDGQL) are disordered. The segment covering 1019–1031 (GRASSSGAGAARG) has biased composition (low complexity).

This sequence belongs to the DNA mismatch repair MutS family.

This protein is involved in the repair of mismatches in DNA. It is possible that it carries out the mismatch recognition step. This protein has a weak ATPase activity. The polypeptide is DNA mismatch repair protein MutS (Roseiflexus sp. (strain RS-1)).